Reading from the N-terminus, the 391-residue chain is Formate-dependent phosphoribosylglycinamide formyltransferase (391 aa).

N(1)-(5-phospho-beta-D-ribosyl)glycinamide-binding positions include 20 to 21 (EL) and E80. ATP is bound by residues R112, K153, 158–163 (SSGKGQ), 193–196 (EGFI), and E201. In terms of domain architecture, ATP-grasp spans 117-306 (RLAAETLGLP…EFALHVRAIL (190 aa)). E265 and E277 together coordinate Mg(2+). Residues D284, K354, and 361-362 (RR) contribute to the N(1)-(5-phospho-beta-D-ribosyl)glycinamide site.

The protein belongs to the PurK/PurT family. As to quaternary structure, homodimer.

It carries out the reaction N(1)-(5-phospho-beta-D-ribosyl)glycinamide + formate + ATP = N(2)-formyl-N(1)-(5-phospho-beta-D-ribosyl)glycinamide + ADP + phosphate + H(+). The protein operates within purine metabolism; IMP biosynthesis via de novo pathway; N(2)-formyl-N(1)-(5-phospho-D-ribosyl)glycinamide from N(1)-(5-phospho-D-ribosyl)glycinamide (formate route): step 1/1. Functionally, involved in the de novo purine biosynthesis. Catalyzes the transfer of formate to 5-phospho-ribosyl-glycinamide (GAR), producing 5-phospho-ribosyl-N-formylglycinamide (FGAR). Formate is provided by PurU via hydrolysis of 10-formyl-tetrahydrofolate. The sequence is that of Formate-dependent phosphoribosylglycinamide formyltransferase from Shewanella sp. (strain MR-7).